Here is a 314-residue protein sequence, read N- to C-terminus: N-alpha-acetyltransferase 80 (314 aa).

The 154-residue stretch at 90 to 243 (LEPVHCRPEL…TTVLRAFSKP (154 aa)) folds into the N-acetyltransferase domain. Residues Arg113 and 118–121 (RLHS) each bind substrate. Residues 169–171 (VVV), 177–182 (GRGFGR), and Gln207 each bind acetyl-CoA. A disordered region spans residues 260–295 (VPRSSKGPPLPPPPPLPQSLTASPPPSPEPLPQSPL). The span at 267–292 (PPLPPPPPLPQSLTASPPPSPEPLPQ) shows a compositional bias: pro residues.

The protein belongs to the acetyltransferase family.

It is found in the cytoplasm. Its subcellular location is the cytosol. The catalysed reaction is N-terminal L-aspartyl-L-aspartyl-L-aspartyl-[protein] + acetyl-CoA = N-terminal N-acetyl-L-aspartyl-L-aspartyl-L-aspartyl-[protein] + CoA + H(+). It carries out the reaction N-terminal L-glutamyl-L-glutamyl-L-glutamyl-[protein] + acetyl-CoA = N-terminal N-acetyl-L-glutamyl-L-glutamyl-L-glutamyl-[protein] + CoA + H(+). Its function is as follows. N-alpha-acetyltransferase that specifically mediates the acetylation of the acidic amino terminus of processed forms of beta- and gamma-actin (ACTB and ACTG, respectively). N-terminal acetylation of processed beta- and gamma-actin regulates actin filament depolymerization and elongation. In vivo, preferentially displays N-terminal acetyltransferase activity towards acid N-terminal sequences starting with Asp-Asp-Asp and Glu-Glu-Glu. In vitro, shows high activity towards Met-Asp-Glu-Leu and Met-Asp-Asp-Asp. May act as a tumor suppressor. The protein is N-alpha-acetyltransferase 80 of Mus musculus (Mouse).